A 1043-amino-acid chain; its full sequence is MNWPFFRAAVVLFIFLVVLEVNSDFRIQVRDYNTKNGTIKWHSLRRQKREWIKFAAACREGEDNSKRNPIAKIHSDCAANQQVTYRISGVGIDQPPYGIFVINQKTGEINITSIVDREVTPFFIIYCRALNSLGQDLEKPLELRVRVLDINDNPPVFSMSTFVGEIEENSNANTLVMVLNATDADEPNNLNSKIAFKIIRQEPSDSPMFIINRYTGEIRTMNNFLDREQYGQYSLAVRGSDRDGGADGMSAECECNIKILDVNDNIPYMELPTQSISIEENSLNSNLLQIRVIDLDEEFSANWMAVIFFISGNEGNWFEIEMNERTNVGTLKVVKPLDFEAMNNLQLSLGVRNKAEFHQSIMSQYKLTATAISVTVLNVVEGSVFRPGSKTFVVNSNMGQNYKIGEYVAWDLDANRPSTTVRYVMGRNPTDLLAIDSKTAIITLRNKVTMEQYKILGGKYQGTILSIDDALQRTCTGTIVINLENGGWKTERPNVNGSTTSAYGLTSGGVTTNGYTTGGGVGTVTFAVGTNGYGVGTGVYQPLRDNVHFGPAGIGLLIMGFLVLGLVPFLLMCCDCGGAPGGGAAFEPVPECSDGAIHSWAVEGAQADPGVLANSAVPCIPVTNANVIEYVDNSGVYTNEYGAREMQDLGGGERTTGFELTDGVKMSGGPEICQEYPGTLRRNSMRECREGGLNMNFMESYFCQKAYAYADEDEGRPSNDCLLIYDIEGAGSPAGSVGCCSFIGEDLDDSFLDTLGPKFKKLADISLGKDVEPFPDSDPSWPPKSTEPVCPPQGTEPTGGGHPPISPRFGTTTVISENTYPSGPGVQHPTPIPDPLGYGNVTVTESYTSSGTLKPSVHIHDNRHASNVVVTERVVGPISGADLQGMLEMPDLRDGSNVIVTERVIAPSSSLPTTLTIPDPRQSSNVVVTERVIQPTSGIVGNLSMHPELSNTHNVIVTERVVSGSGITGSSSLLGSAGGGSGGGIGLGSLGGGGGLSSSLGGAATIGHLRGSAEHHFSNTLGSASPTTTRSRITKYSTVQYTK.

The first 23 residues, 1–23, serve as a signal peptide directing secretion; it reads MNWPFFRAAVVLFIFLVVLEVNS. Positions 24-49 are excised as a propeptide; it reads DFRIQVRDYNTKNGTIKWHSLRRQKR. Cadherin domains lie at 50-158, 159-270, 271-385, and 386-498; these read EWIK…PVFS, MSTF…PYME, LPTQ…GSVF, and RPGS…VNGS. At 50-551 the chain is on the extracellular side; sequence EWIKFAAACR…PLRDNVHFGP (502 aa). N-linked (GlcNAc...) asparagine glycans are attached at residues asparagine 110 and asparagine 180. Asparagine 496 carries an N-linked (GlcNAc...) asparagine glycan. A helical transmembrane segment spans residues 552 to 572; the sequence is AGIGLLIMGFLVLGLVPFLLM. At 573-1043 the chain is on the cytoplasmic side; the sequence is CCDCGGAPGG…TKYSTVQYTK (471 aa). A disordered region spans residues 770-807; that stretch reads DVEPFPDSDPSWPPKSTEPVCPPQGTEPTGGGHPPISP. Desmoglein repeat repeat units lie at residues 819-845, 846-875, 876-905, 906-933, and 934-962; these read TYPSGPGVQHPTPIPDPLGYGNVTVTE, SYTSSGTLKPSVHIHDNRHASNVVVTERVV, GPISGADLQGMLEMPDLRDGSNVIVTERVI, APSSSLPTTLTIPDPRQSSNVVVTERVI, and QPTSGIVGNLSMHPELSNTHNVIVTERVV.

As to quaternary structure, binds to JUP/plakoglobin. Interacts with PKP2. Interacts with DSC3; there is evidence to suggest that the interaction promotes cell-cell adhesion of keratinocytes. In terms of tissue distribution, expressed in the epidermis. Expressed in the muzzle epithelium.

The protein localises to the cell membrane. Its subcellular location is the cell junction. It is found in the desmosome. It localises to the cytoplasm. The protein resides in the nucleus. Component of intercellular desmosome junctions. Involved in the interaction of plaque proteins and intermediate filaments mediating cell-cell adhesion. This chain is Desmoglein-1 (DSG1), found in Bos taurus (Bovine).